A 123-amino-acid chain; its full sequence is Dormancy-associated protein homolog 4 (123 aa).

The segment at 7–86 (LWDETVAGPT…NPGTPLTPGT (80 aa)) is disordered. Low complexity predominate over residues 30 to 46 (LSTVRSSPPSLSSDQVT). Polar residues-rich tracts occupy residues 47–58 (RSIMVTKGNNNV) and 71–80 (PTCSSSNPGT). At serine 74 the chain carries Phosphoserine.

The protein belongs to the DRM1/ARP family.

The sequence is that of Dormancy-associated protein homolog 4 from Arabidopsis thaliana (Mouse-ear cress).